We begin with the raw amino-acid sequence, 466 residues long: Rho GTPase-activating protein 1 (466 aa).

Disordered stretches follow at residues 1–31 (MTEV…SLSY) and 65–84 (EEQD…DDGG). Positions 8–31 (PSSPSASHSSSSSSSSPSPSSLSY) are enriched in low complexity. The span at 65–74 (EEQDLRRRSS) shows a compositional bias: basic and acidic residues. The CRIB domain maps to 117–130 (IGWPTNVRHVAHVT). Residues 162 to 342 (VSTESMQLSY…TLIEKTLRER (181 aa)) enclose the Rho-GAP domain. Residues 354–402 (PLEPSDESGHQSPSQSLAFNTSEQSEETQSDNIENAENQSSSSEISDEL) are disordered. 2 stretches are compositionally biased toward polar residues: residues 363–376 (HQSP…NTSE) and 383–397 (SDNI…SSSE).

Functionally, acts as a GTPase activator for the Rac-type GTPase by converting it to an inactive GDP-bound state. The sequence is that of Rho GTPase-activating protein 1 (ROPGAP1) from Arabidopsis thaliana (Mouse-ear cress).